The chain runs to 191 residues: Phosphoheptose isomerase (191 aa).

The SIS domain maps to 37-191; the sequence is IAESFKQDGK…IIQLIEKEME (155 aa). 52–54 serves as a coordination point for substrate; sequence NGG. Positions 61 and 65 each coordinate Zn(2+). Substrate contacts are provided by residues glutamate 65, 93–94, 119–121, serine 124, and glutamine 172; these read ND and STS. The Zn(2+) site is built by glutamine 172 and histidine 180.

Belongs to the SIS family. GmhA subfamily. As to quaternary structure, homotetramer. Requires Zn(2+) as cofactor.

It is found in the cytoplasm. The catalysed reaction is 2 D-sedoheptulose 7-phosphate = D-glycero-alpha-D-manno-heptose 7-phosphate + D-glycero-beta-D-manno-heptose 7-phosphate. The protein operates within carbohydrate biosynthesis; D-glycero-D-manno-heptose 7-phosphate biosynthesis; D-glycero-alpha-D-manno-heptose 7-phosphate and D-glycero-beta-D-manno-heptose 7-phosphate from sedoheptulose 7-phosphate: step 1/1. It functions in the pathway bacterial outer membrane biogenesis; LPS core biosynthesis. In terms of biological role, catalyzes the isomerization of sedoheptulose 7-phosphate in D-glycero-D-manno-heptose 7-phosphate. In Vibrio vulnificus (strain CMCP6), this protein is Phosphoheptose isomerase.